The primary structure comprises 235 residues: Urease accessory protein UreF (235 aa).

Belongs to the UreF family. In terms of assembly, ureD, UreF and UreG form a complex that acts as a GTP-hydrolysis-dependent molecular chaperone, activating the urease apoprotein by helping to assemble the nickel containing metallocenter of UreC. The UreE protein probably delivers the nickel.

The protein localises to the cytoplasm. In terms of biological role, required for maturation of urease via the functional incorporation of the urease nickel metallocenter. In Haemophilus influenzae (strain ATCC 51907 / DSM 11121 / KW20 / Rd), this protein is Urease accessory protein UreF.